Consider the following 251-residue polypeptide: MILYEYPFNERIRTLLRLEDLFERFAFFLAQEDPREHHVALTTLFEIAEVTGRADLKSDLMKELERQRQTLAPFRGNPGIEQNALEAVLGEIEQTLANLAQMQGKTGQHLVDNEWLASIRSRAVIPGGTCKFDLPSYYAWQQWPAEQRRQDIAKWIMPLLPLRDAAAIVLRLARESGQASKVMAMQGSYQQMLSGRSYQLMQVRVPPELRVIPEASANKYMLWVRFTMQDGDVRPRAVDIDVPFHLTLCNL.

The protein belongs to the ZapD family. Interacts with FtsZ.

It is found in the cytoplasm. Cell division factor that enhances FtsZ-ring assembly. Directly interacts with FtsZ and promotes bundling of FtsZ protofilaments, with a reduction in FtsZ GTPase activity. In Burkholderia ambifaria (strain MC40-6), this protein is Cell division protein ZapD.